Here is a 714-residue protein sequence, read N- to C-terminus: Polyribonucleotide nucleotidyltransferase (714 aa).

Residues Asp487 and Asp493 each coordinate Mg(2+). Residues 554 to 613 (PRIEVLQIPTDKIRDVIGTGGKVIREIVEKTGAKINIEDDGTVKVASANGESIRAAIKWI) form the KH domain. The 69-residue stretch at 623–691 (GQIYDGTVVK…DRGKVRLSMK (69 aa)) folds into the S1 motif domain.

This sequence belongs to the polyribonucleotide nucleotidyltransferase family. Mg(2+) is required as a cofactor.

The protein localises to the cytoplasm. The enzyme catalyses RNA(n+1) + phosphate = RNA(n) + a ribonucleoside 5'-diphosphate. Its function is as follows. Involved in mRNA degradation. Catalyzes the phosphorolysis of single-stranded polyribonucleotides processively in the 3'- to 5'-direction. The sequence is that of Polyribonucleotide nucleotidyltransferase from Afipia carboxidovorans (strain ATCC 49405 / DSM 1227 / KCTC 32145 / OM5) (Oligotropha carboxidovorans).